A 212-amino-acid polypeptide reads, in one-letter code: MSQSTIHKIAVKKRTETGKNENNRLRSSGMIPVNIIGAGVATSGAVNEKELAKMVHSGIRQSTLIELDVEGQGQQKVFVKEIQRFPEIDRIRHVDFYKVVPGQKIVTKIGIETTGVAKGSKTGGQFEHIIHEIRVKTIPEDLLENLTIDVTDLDVGDSIKISQLKVPASWEILINGDPIVTSVNKTKALLAAERAEAKGAVPDDAKAKKGKK.

The disordered stretch occupies residues 1-25 (MSQSTIHKIAVKKRTETGKNENNRL). The segment covering 13 to 24 (KRTETGKNENNR) has biased composition (basic and acidic residues).

Belongs to the bacterial ribosomal protein bL25 family. CTC subfamily. As to quaternary structure, part of the 50S ribosomal subunit; part of the 5S rRNA/L5/L18/L25 subcomplex. Contacts the 5S rRNA. Binds to the 5S rRNA independently of L5 and L18.

This is one of the proteins that binds to the 5S RNA in the ribosome where it forms part of the central protuberance. The chain is Large ribosomal subunit protein bL25 from Leptospira borgpetersenii serovar Hardjo-bovis (strain L550).